Here is a 332-residue protein sequence, read N- to C-terminus: Packaging enzyme P4 (332 aa).

Residues 111 to 138 (RWPSEGIYSGVTALMGATGSGKSITLNE) are involved in the regulation and mechanisms of transcription, replication and genome packaging. 126 to 133 (GATGSGKS) is an ATP binding site. Positions 310 to 332 (LERGSVDTDDRNSAPRRGANFSL) are disordered. The segment covering 313-322 (GSVDTDDRNS) has biased composition (basic and acidic residues).

As to quaternary structure, homohexamer. Part of the packaging complex composed of RDRP, P4 and P7.

The protein localises to the virion. The enzyme catalyses a ribonucleoside 5'-triphosphate + H2O = a ribonucleoside 5'-diphosphate + phosphate + H(+). In terms of biological role, packaging motor with helicase and translocase activities. Part of the packaging complex that packages the viral RNA segments, replicate them into a double-stranded form and transcribe them. is one of the structural proteins of the polyhedral procapsid, which is responsible for genomic replication and transcription. Displays single-stranded RNA-stimulated NTPase activity. The protein is Packaging enzyme P4 (P4) of Pseudomonas savastanoi pv. phaseolicola (Pseudomonas syringae pv. phaseolicola).